Reading from the N-terminus, the 183-residue chain is MSPDRFPGWPHWLPIAAQRPRMSPDWWPWVASRDSLTARLRIASPRPFSVRLLTQGVTRPRLDEAQALGLPHRTHVWHREVLLRLGNASWVAARSVAPLEGLSGARLCTLGERSLGSWLFRQPNLERGPIEAIRAPAMTGLDAWRGDAGPWGRRSLLRVGRTRILVQEFFLAAMAADLSLPSR.

Substrate is bound by residues Arg-79, Leu-115, and Glu-168.

It belongs to the UbiC family.

The protein localises to the cytoplasm. The enzyme catalyses chorismate = 4-hydroxybenzoate + pyruvate. It functions in the pathway cofactor biosynthesis; ubiquinone biosynthesis. Functionally, removes the pyruvyl group from chorismate, with concomitant aromatization of the ring, to provide 4-hydroxybenzoate (4HB) for the ubiquinone pathway. This is Probable chorismate pyruvate-lyase from Chromohalobacter salexigens (strain ATCC BAA-138 / DSM 3043 / CIP 106854 / NCIMB 13768 / 1H11).